A 116-amino-acid chain; its full sequence is Ferredoxin-thioredoxin reductase, catalytic chain (116 aa).

Cys-57 is a binding site for [4Fe-4S] cluster. Residue Cys-59 is the Nucleophile of the active site. A disulfide bridge connects residues Cys-59 and Cys-89. Cys-76, Cys-78, and Cys-87 together coordinate [4Fe-4S] cluster.

This sequence belongs to the ferredoxin thioredoxin reductase beta subunit family. As to quaternary structure, heterodimer of subunit A (variable subunit) and subunit B (catalytic subunit). Heterodimeric FTR forms a complex with ferredoxin and thioredoxin. It depends on [4Fe-4S] cluster as a cofactor.

It localises to the plastid. Its subcellular location is the chloroplast. The enzyme catalyses [thioredoxin]-disulfide + 2 reduced [2Fe-2S]-[ferredoxin] + 2 H(+) = [thioredoxin]-dithiol + 2 oxidized [2Fe-2S]-[ferredoxin]. In terms of biological role, catalytic subunit of the ferredoxin-thioredoxin reductase (FTR), which catalyzes the two-electron reduction of thioredoxins by the electrons provided by reduced ferredoxin. This is Ferredoxin-thioredoxin reductase, catalytic chain (ftrB) from Pyropia yezoensis (Susabi-nori).